The chain runs to 100 residues: Integration host factor subunit alpha (100 aa).

Residues 54-73 (DLRDKRQRPGRNPKTGEEIP) form a disordered region.

Belongs to the bacterial histone-like protein family. Heterodimer of an alpha and a beta chain.

Functionally, this protein is one of the two subunits of integration host factor, a specific DNA-binding protein that functions in genetic recombination as well as in transcriptional and translational control. This chain is Integration host factor subunit alpha, found in Pseudomonas aeruginosa (strain UCBPP-PA14).